Reading from the N-terminus, the 493-residue chain is Acetyl-coenzyme A carboxylase carboxyl transferase subunit beta (493 aa).

The CoA carboxyltransferase N-terminal domain occupies 231 to 493 (LWVQCENCYG…FKLHAFFPLN (263 aa)). Zn(2+) contacts are provided by cysteine 235, cysteine 238, cysteine 254, and cysteine 257. The segment at 235–257 (CENCYGLNYKKFLKSKINLCEQC) adopts a C4-type zinc-finger fold.

This sequence belongs to the AccD/PCCB family. In terms of assembly, acetyl-CoA carboxylase is a heterohexamer composed of biotin carboxyl carrier protein, biotin carboxylase and 2 subunits each of ACCase subunit alpha and ACCase plastid-coded subunit beta (accD). Zn(2+) is required as a cofactor.

The protein localises to the plastid stroma. The catalysed reaction is N(6)-carboxybiotinyl-L-lysyl-[protein] + acetyl-CoA = N(6)-biotinyl-L-lysyl-[protein] + malonyl-CoA. It participates in lipid metabolism; malonyl-CoA biosynthesis; malonyl-CoA from acetyl-CoA: step 1/1. In terms of biological role, component of the acetyl coenzyme A carboxylase (ACC) complex. Biotin carboxylase (BC) catalyzes the carboxylation of biotin on its carrier protein (BCCP) and then the CO(2) group is transferred by the transcarboxylase to acetyl-CoA to form malonyl-CoA. The sequence is that of Acetyl-coenzyme A carboxylase carboxyl transferase subunit beta from Epifagus virginiana (Beechdrops).